We begin with the raw amino-acid sequence, 261 residues long: uncharacterized protein (261 aa).

Residues 1 to 22 (MRDSKRVVLYISIIVLSIFIIG) form the signal peptide. Residue Cys-23 is the site of N-palmitoyl cysteine attachment. The S-diacylglycerol cysteine moiety is linked to residue Cys-23.

The protein belongs to the staphylococcal tandem lipoprotein family.

The protein resides in the cell membrane. This is an uncharacterized protein from Staphylococcus aureus (strain Mu50 / ATCC 700699).